The chain runs to 220 residues: MHSAKLIDHTLLKPESTRTQIDQIIDEAKAYHFKSVCVNPTHVKYAAERLADSEVLVCTVIGFPLGASTTATKAFETEDAIQNGADEIDMVINIGALKDGRFDDVQQDIEAVVKAAKGHTVKVIIETVLLDHDEIVKASELTKAAGADFVKTSTGFAGGGATAEDVKLMKDTVGADVEVKASGGVRNLEDFNKMVEAGATRIGASAGVQIMQGLEADSDY.

D89 (proton donor/acceptor) is an active-site residue. The active-site Schiff-base intermediate with acetaldehyde is the K151. K180 functions as the Proton donor/acceptor in the catalytic mechanism.

This sequence belongs to the DeoC/FbaB aldolase family. DeoC type 1 subfamily.

It localises to the cytoplasm. The enzyme catalyses 2-deoxy-D-ribose 5-phosphate = D-glyceraldehyde 3-phosphate + acetaldehyde. The protein operates within carbohydrate degradation; 2-deoxy-D-ribose 1-phosphate degradation; D-glyceraldehyde 3-phosphate and acetaldehyde from 2-deoxy-alpha-D-ribose 1-phosphate: step 2/2. In terms of biological role, catalyzes a reversible aldol reaction between acetaldehyde and D-glyceraldehyde 3-phosphate to generate 2-deoxy-D-ribose 5-phosphate. The sequence is that of Deoxyribose-phosphate aldolase 2 from Staphylococcus aureus (strain MSSA476).